Here is a 263-residue protein sequence, read N- to C-terminus: Type-2Bb cytolytic delta-endotoxin (263 aa).

The protein belongs to the cyt1/cyt2 endotoxin family. In terms of processing, active after proteolytic processing.

Its function is as follows. Kills the larvae of dipteran insects by making pores in the epithelial cell membrane of the insect midgut. The chain is Type-2Bb cytolytic delta-endotoxin (cyt2Bb1) from Bacillus thuringiensis subsp. jegathesan.